The chain runs to 393 residues: tRNA(Met) cytidine acetate ligase (393 aa).

3 residues coordinate ATP: Gly81, Asn142, and Arg167.

It belongs to the TmcAL family.

It localises to the cytoplasm. The enzyme catalyses cytidine(34) in elongator tRNA(Met) + acetate + ATP = N(4)-acetylcytidine(34) in elongator tRNA(Met) + AMP + diphosphate. Functionally, catalyzes the formation of N(4)-acetylcytidine (ac(4)C) at the wobble position of elongator tRNA(Met), using acetate and ATP as substrates. First activates an acetate ion to form acetyladenylate (Ac-AMP) and then transfers the acetyl group to tRNA to form ac(4)C34. The chain is tRNA(Met) cytidine acetate ligase from Bacillus cereus (strain ZK / E33L).